Consider the following 313-residue polypeptide: Glutaminase (313 aa).

Substrate-binding residues include Ser-64, Asn-116, Glu-163, Asn-170, Tyr-194, Tyr-246, and Val-264.

It belongs to the glutaminase family. Homotetramer.

It catalyses the reaction L-glutamine + H2O = L-glutamate + NH4(+). This Exiguobacterium sp. (strain ATCC BAA-1283 / AT1b) protein is Glutaminase.